Reading from the N-terminus, the 189-residue chain is MRVGVLAIQGSVREHIEKLKLIDGVEAVLAKDKNTLLSLDALIIPGGESTAIGKMIVDFGLKDAILKLNERKIPIWGTCAGMILMAKYIVNDDKVHLGIMDISVKRNAYGSQLDSFKTKLIIPAVSNNEIEAVFIRAPYIENVGNGVRILAKHQGKIVAAQQDNLLATSFHPELTDDLSFYKYFLRLNS.

Position 47–49 (Gly-47–Ser-49) interacts with L-glutamine. The active-site Nucleophile is Cys-79. Residues Arg-106 and Ile-135 to Arg-136 contribute to the L-glutamine site. Residues His-171 and Glu-173 each act as charge relay system in the active site.

Belongs to the glutaminase PdxT/SNO family. In terms of assembly, in the presence of PdxS, forms a dodecamer of heterodimers. Only shows activity in the heterodimer.

The enzyme catalyses aldehydo-D-ribose 5-phosphate + D-glyceraldehyde 3-phosphate + L-glutamine = pyridoxal 5'-phosphate + L-glutamate + phosphate + 3 H2O + H(+). It catalyses the reaction L-glutamine + H2O = L-glutamate + NH4(+). The protein operates within cofactor biosynthesis; pyridoxal 5'-phosphate biosynthesis. Functionally, catalyzes the hydrolysis of glutamine to glutamate and ammonia as part of the biosynthesis of pyridoxal 5'-phosphate. The resulting ammonia molecule is channeled to the active site of PdxS. In Thermoanaerobacter pseudethanolicus (strain ATCC 33223 / 39E) (Clostridium thermohydrosulfuricum), this protein is Pyridoxal 5'-phosphate synthase subunit PdxT.